A 587-amino-acid polypeptide reads, in one-letter code: UDP-N-acetylmuramoylalanine--D-glutamate ligase (587 aa).

A disordered region spans residues 124–147 (DHLVPPESPLSDASDISDASDATD). Positions 132–147 (PLSDASDISDASDATD) are enriched in low complexity. 214 to 220 (GTNGKTT) provides a ligand contact to ATP.

This sequence belongs to the MurCDEF family.

It is found in the cytoplasm. It carries out the reaction UDP-N-acetyl-alpha-D-muramoyl-L-alanine + D-glutamate + ATP = UDP-N-acetyl-alpha-D-muramoyl-L-alanyl-D-glutamate + ADP + phosphate + H(+). Its pathway is cell wall biogenesis; peptidoglycan biosynthesis. Functionally, cell wall formation. Catalyzes the addition of glutamate to the nucleotide precursor UDP-N-acetylmuramoyl-L-alanine (UMA). The chain is UDP-N-acetylmuramoylalanine--D-glutamate ligase from Polaromonas sp. (strain JS666 / ATCC BAA-500).